The following is a 348-amino-acid chain: D-erythrose-4-phosphate dehydrogenase (348 aa).

Residues 12–13 (RI) and arginine 81 each bind NAD(+). Substrate-binding positions include 154-156 (SCT), arginine 200, 213-214 (TK), and arginine 236. Catalysis depends on cysteine 155, which acts as the Nucleophile. NAD(+) is bound at residue asparagine 318.

The protein belongs to the glyceraldehyde-3-phosphate dehydrogenase family. Epd subfamily. Homotetramer.

The protein resides in the cytoplasm. The enzyme catalyses D-erythrose 4-phosphate + NAD(+) + H2O = 4-phospho-D-erythronate + NADH + 2 H(+). It participates in cofactor biosynthesis; pyridoxine 5'-phosphate biosynthesis; pyridoxine 5'-phosphate from D-erythrose 4-phosphate: step 1/5. Catalyzes the NAD-dependent conversion of D-erythrose 4-phosphate to 4-phosphoerythronate. This chain is D-erythrose-4-phosphate dehydrogenase, found in Salmonella schwarzengrund (strain CVM19633).